The chain runs to 138 residues: Large ribosomal subunit protein uL16 (138 aa).

The protein belongs to the universal ribosomal protein uL16 family. As to quaternary structure, part of the 50S ribosomal subunit.

Functionally, binds 23S rRNA and is also seen to make contacts with the A and possibly P site tRNAs. The protein is Large ribosomal subunit protein uL16 of Anaeromyxobacter sp. (strain Fw109-5).